Consider the following 410-residue polypeptide: D-amino acid dehydrogenase (410 aa).

Position 9 to 14 (9 to 14) interacts with FAD; the sequence is GGGIVG.

The protein belongs to the DadA oxidoreductase family. It depends on FAD as a cofactor.

Its subcellular location is the cell inner membrane. It carries out the reaction a D-alpha-amino acid + a quinone + H2O = a 2-oxocarboxylate + a quinol + NH4(+). Functionally, catalyzes the oxidative deamination of D-amino acids. Has broad substrate specificity; is mostly active on D-proline, and to a lesser extent, on several other D-amino acids such as D-alanine, D-phenylalanine and D-serine. Mediates electron transport from D-proline to coenzyme Q1 in vitro, and is involved in the electron transport chain from D-proline to the c-type cytochrome in vivo. The protein is D-amino acid dehydrogenase of Helicobacter pylori (strain ATCC 700392 / 26695) (Campylobacter pylori).